Reading from the N-terminus, the 219-residue chain is Ribonuclease HII (219 aa).

The RNase H type-2 domain occupies 22–219 (GLVAGVDEVG…LLAMRMEAVV (198 aa)). A divalent metal cation is bound by residues aspartate 28, glutamate 29, and aspartate 125.

This sequence belongs to the RNase HII family. Mn(2+) serves as cofactor. Requires Mg(2+) as cofactor.

The protein resides in the cytoplasm. The catalysed reaction is Endonucleolytic cleavage to 5'-phosphomonoester.. Endonuclease that specifically degrades the RNA of RNA-DNA hybrids. The chain is Ribonuclease HII from Granulibacter bethesdensis (strain ATCC BAA-1260 / CGDNIH1).